The following is a 262-amino-acid chain: LysM domain-containing protein ARB_03438 (262 aa).

Positions M1–A22 are cleaved as a signal peptide. In terms of domain architecture, LysM 1 spans F31–L75. Positions T85 to T112 are disordered. The segment covering A86 to T112 has biased composition (polar residues). The 48-residue stretch at F132–T179 folds into the LysM 2 domain. Residues G184–P240 are disordered. A compositionally biased stretch (low complexity) spans P197–S214. Pro residues predominate over residues Q215–Q226. Residues P227–P240 are compositionally biased toward low complexity. N-linked (GlcNAc...) asparagine glycosylation occurs at N233.

Its subcellular location is the secreted. In terms of biological role, might have a role in sequestration of chitin oligosaccharides (breakdown products of fungal cell walls that are released during invasion and act as triggers of host immunity) to dampen host defense. The chain is LysM domain-containing protein ARB_03438 from Arthroderma benhamiae (strain ATCC MYA-4681 / CBS 112371) (Trichophyton mentagrophytes).